The sequence spans 358 residues: MANGSGLSVTELAGSVGFILAVLVEVGAVLGNGTLLVVVLRTPDLQDAFYLAHLCVVDLLAAASIMPLGLLAAPPGLGTVPLDPSSCRAARFLSAALLPACTLGVAALGLARYRLIVHPLRPGARPAPALVLTAVWSAAALLGALSLLGPPPAPPPAPARCSVLAGGLGPFRPLWAMLAFALPALLLLAAYGSIFLVARRAALRPPRGTRPRSDSLDSRLSFLPPLRPRLLGGKAALAPALAVGQFAACWLPYGCACLAPAARAAAAEATVTWVAYSAFAAHPFLYGLLQRPVRLALGRLTRRALPRAPKACTSQAWHLQTLLRRLQELRKDPVLGPSEAPEQARELARQTPSVSEAT.

The Extracellular portion of the chain corresponds to 1 to 17 (MANGSGLSVTELAGSVG). Asn-3 carries an N-linked (GlcNAc...) asparagine glycan. The helical transmembrane segment at 18-38 (FILAVLVEVGAVLGNGTLLVV) threads the bilayer. The Cytoplasmic segment spans residues 39–53 (VLRTPDLQDAFYLAH). Residues 54–74 (LCVVDLLAAASIMPLGLLAAP) form a helical membrane-spanning segment. Over 75–89 (PGLGTVPLDPSSCRA) the chain is Extracellular. Residues 90–110 (ARFLSAALLPACTLGVAALGL) form a helical membrane-spanning segment. At 111–128 (ARYRLIVHPLRPGARPAP) the chain is on the cytoplasmic side. Residues 129–149 (ALVLTAVWSAAALLGALSLLG) form a helical membrane-spanning segment. Residues 150 to 176 (PPPAPPPAPARCSVLAGGLGPFRPLWA) are Extracellular-facing. A helical transmembrane segment spans residues 177–197 (MLAFALPALLLLAAYGSIFLV). Residues 198–234 (ARRAALRPPRGTRPRSDSLDSRLSFLPPLRPRLLGGK) lie on the Cytoplasmic side of the membrane. A helical transmembrane segment spans residues 235–255 (AALAPALAVGQFAACWLPYGC). Topologically, residues 256 to 268 (ACLAPAARAAAAE) are extracellular. A helical transmembrane segment spans residues 269-289 (ATVTWVAYSAFAAHPFLYGLL). At 290-358 (QRPVRLALGR…RQTPSVSEAT (69 aa)) the chain is on the cytoplasmic side. Residues 334-358 (VLGPSEAPEQARELARQTPSVSEAT) are disordered.

Belongs to the G-protein coupled receptor 1 family. Homodimer. Forms heterodimer with MTNR1B. Interacts with ARRB1 and ARRB2 in a spontaneous and agonist-independent manner; leading to the internalization of GPR62 in the endosomal compartment. In terms of tissue distribution, expressed in the brain and testes. Expressed widely, in the brain, including the cerebral cortex, cerebellum, hippocampus,thalamus and pituitary gland. In the testes, expressed specifically in the germ cells.

It localises to the cell membrane. Its subcellular location is the endosome membrane. Orphan G-protein coupled receptor. Constitutively activates the G(q/11)/inositol phosphate and the G(s)-alpha/cAMP signaling pathways. Has spontaneous activity for beta-arrestin recruitment. Shows a reciprocal regulatory interaction with the melatonin receptor MTNR1B most likely through receptor heteromerization. This is G-protein coupled receptor 62 (Gpr62) from Mus musculus (Mouse).